The sequence spans 317 residues: Melanocyte-stimulating hormone receptor (317 aa).

Residues 1–37 are Extracellular-facing; it reads MPMQGAQRRLLGSLNSTPTATPNLGLAANHTGAPCLE. N29 is a glycosylation site (N-linked (GlcNAc...) asparagine). Residues 38-63 traverse the membrane as a helical segment; sequence VSIPDGLFLSLGLVSLVENVLVVAAI. The Cytoplasmic segment spans residues 64–72; that stretch reads AKNRNLHSP. Residues 73-93 traverse the membrane as a helical segment; that stretch reads MYCFICCLALSDLLVSGSNML. Over 94–118 the chain is Extracellular; it reads EMAVILLLEAGALATRASVVQQLQN. The chain crosses the membrane as a helical span at residues 119–140; that stretch reads TIDVLTCSSMLCSLCFLGAIAV. At 141–163 the chain is on the cytoplasmic side; that stretch reads DRYVSIFYALRYHSIVTLPRARR. Residues 164–183 traverse the membrane as a helical segment; sequence AIAAIWVASVLSSTLFIAYC. Residues 184-191 are Extracellular-facing; sequence DHAAVLLC. Residues 192–211 traverse the membrane as a helical segment; that stretch reads LVVFFLAMLVLMAVLYVHML. The Cytoplasmic segment spans residues 212–240; the sequence is ARACQHAQGITRLHKRQLPAHQGFGLRGA. The chain crosses the membrane as a helical span at residues 241-266; sequence ATLTILLGIFFVCWGPFFLHLMLVVL. Residues 267–279 are Extracellular-facing; the sequence is CPQHLTCSCIFKN. Residues 280 to 300 traverse the membrane as a helical segment; sequence FKVFLTLIICNTIIDPLIYAF. The Cytoplasmic portion of the chain corresponds to 301–317; that stretch reads RSQELCRTLKEVLLCSW. Residue C315 is the site of S-palmitoyl cysteine attachment.

The protein belongs to the G-protein coupled receptor 1 family. Interacts with MGRN1, but does not undergo MGRN1-mediated ubiquitination; this interaction competes with GNAS-binding and thus inhibits agonist-induced cAMP production. Interacts with OPN3; the interaction results in a decrease in MC1R-mediated cAMP signaling and ultimately a decrease in melanin production in melanocytes.

It localises to the cell membrane. In terms of biological role, receptor for MSH (alpha, beta and gamma) and ACTH. The activity of this receptor is mediated by G proteins which activate adenylate cyclase. Mediates melanogenesis, the production of eumelanin (black/brown) and phaeomelanin (red/yellow), via regulation of cAMP signaling in melanocytes. This Alouatta sara (Bolivian red howler monkey) protein is Melanocyte-stimulating hormone receptor (MC1R).